Consider the following 171-residue polypeptide: Ribosome maturation factor RimM (171 aa).

One can recognise a PRC barrel domain in the interval Lys97–Leu170.

It belongs to the RimM family. As to quaternary structure, binds ribosomal protein uS19.

It localises to the cytoplasm. Its function is as follows. An accessory protein needed during the final step in the assembly of 30S ribosomal subunit, possibly for assembly of the head region. Essential for efficient processing of 16S rRNA. May be needed both before and after RbfA during the maturation of 16S rRNA. It has affinity for free ribosomal 30S subunits but not for 70S ribosomes. The sequence is that of Ribosome maturation factor RimM from Azobacteroides pseudotrichonymphae genomovar. CFP2.